Here is a 37-residue protein sequence, read N- to C-terminus: Small ribosomal subunit protein uS19 (37 aa).

The protein belongs to the universal ribosomal protein uS19 family.

The protein is Small ribosomal subunit protein uS19 (RPS15) of Helix lucorum (Snail).